The primary structure comprises 290 residues: 33 kDa chaperonin (290 aa).

2 cysteine pairs are disulfide-bonded: Cys235–Cys237 and Cys268–Cys271.

Belongs to the HSP33 family. Under oxidizing conditions two disulfide bonds are formed involving the reactive cysteines. Under reducing conditions zinc is bound to the reactive cysteines and the protein is inactive.

Its subcellular location is the cytoplasm. Its function is as follows. Redox regulated molecular chaperone. Protects both thermally unfolding and oxidatively damaged proteins from irreversible aggregation. Plays an important role in the bacterial defense system toward oxidative stress. This is 33 kDa chaperonin from Streptococcus uberis (strain ATCC BAA-854 / 0140J).